The chain runs to 406 residues: uncharacterized protein (406 aa).

Over residues 136–153 (SQKNWGSEKNWNSPSQGP) the composition is skewed to polar residues. Residues 136 to 157 (SQKNWGSEKNWNSPSQGPASRE) are disordered.

This is an uncharacterized protein from Rattus norvegicus (Rat).